Consider the following 84-residue polypeptide: Large ribosomal subunit protein bL27 (84 aa).

Positions 1–21 (MAHKKGGGSTKNGRDSNPKYL) are disordered.

The protein belongs to the bacterial ribosomal protein bL27 family.

In Chlorobium phaeovibrioides (strain DSM 265 / 1930) (Prosthecochloris vibrioformis (strain DSM 265)), this protein is Large ribosomal subunit protein bL27.